A 378-amino-acid chain; its full sequence is Chaperone protein DnaJ 2 (378 aa).

Positions 4 to 68 (DYYAVLGVRR…QKKQVYDLGG (65 aa)) constitute a J domain. A CR-type zinc finger spans residues 130-212 (GTTKDIQVDT…CAGDGRVRSR (83 aa)). The Zn(2+) site is built by C143, C146, C160, C163, C186, C189, C200, and C203. CXXCXGXG motif repeat units lie at residues 143-150 (CNTCNGEG), 160-167 (CDMCRGRG), 186-193 (CPQCQGFG), and 200-207 (CPECAGDG). Disordered stretches follow at residues 297 to 319 (RPGT…LRGG) and 351 to 378 (RGEE…FNGR). The segment covering 358 to 367 (GQFQPGQQGL) has biased composition (polar residues).

Belongs to the DnaJ family. As to quaternary structure, homodimer. Zn(2+) serves as cofactor.

It is found in the cytoplasm. Participates actively in the response to hyperosmotic and heat shock by preventing the aggregation of stress-denatured proteins and by disaggregating proteins, also in an autonomous, DnaK-independent fashion. Unfolded proteins bind initially to DnaJ; upon interaction with the DnaJ-bound protein, DnaK hydrolyzes its bound ATP, resulting in the formation of a stable complex. GrpE releases ADP from DnaK; ATP binding to DnaK triggers the release of the substrate protein, thus completing the reaction cycle. Several rounds of ATP-dependent interactions between DnaJ, DnaK and GrpE are required for fully efficient folding. Also involved, together with DnaK and GrpE, in the DNA replication of plasmids through activation of initiation proteins. The polypeptide is Chaperone protein DnaJ 2 (Streptomyces coelicolor (strain ATCC BAA-471 / A3(2) / M145)).